Reading from the N-terminus, the 63-residue chain is Large ribosomal subunit protein uL29 (63 aa).

The protein belongs to the universal ribosomal protein uL29 family.

This chain is Large ribosomal subunit protein uL29, found in Listeria innocua serovar 6a (strain ATCC BAA-680 / CLIP 11262).